A 267-amino-acid chain; its full sequence is 14-3-3-like protein GF14 phi (267 aa).

Position 2 is an N-acetylalanine (Ala-2). Phosphoserine is present on residues Ser-73 and Ser-196. At Thr-217 the chain carries Phosphothreonine. Residues 244-267 (MQDESPEEIKEAAAPKPAEEQKEI) form a disordered region. Ser-248 is subject to Phosphoserine. Over residues 250 to 267 (EEIKEAAAPKPAEEQKEI) the composition is skewed to basic and acidic residues.

Belongs to the 14-3-3 family. Interacts with FD. Interacts with CINV1.

It localises to the nucleus. It is found in the cytoplasm. Is associated with a DNA binding complex that binds to the G box, a well-characterized cis-acting DNA regulatory element found in plant genes. The chain is 14-3-3-like protein GF14 phi (GRF4) from Arabidopsis thaliana (Mouse-ear cress).